A 1127-amino-acid polypeptide reads, in one-letter code: WD repeat and HMG-box DNA-binding protein 1 (1127 aa).

WD repeat units lie at residues 11–50 (GHPEGHTDVCFDDSGNFLVTCGSDGDIRIWESLDDDDPKS), 52–91 (SIGEKAYSFALKNGKVVTAASNNAIQLHTFPDGEPDGILT), 92–131 (RFTTNANHVVFNTDGTRIAAGSGDFLVKVLQVEDSTQQKT), 134–173 (GHSAPVLSVSFDPKDIYLASASCDGSVRIWKISDQTCEAV), 184–223 (FNAKSICRLAWQPKSGKFVAIPVGKAVHLYDRDSLKNICT), 228–267 (FITQPVNIVAWSPCGQYLVAGSVDGCIVAWNIATKACLER), and 271–310 (EKGYTICALAWHPHLPQIAYTDNEGNLGLLEDVCQGDVKQ). Disordered stretches follow at residues 811–1013 (AAEQ…AENK) and 1064–1127 (KAKG…FKKE). A compositionally biased stretch (acidic residues) spans 819–829 (QNEEEDEEEED). The span at 846–857 (GDSRAKPVKQDQ) shows a compositional bias: basic and acidic residues. Over residues 858-877 (YEENNEEEMEEEEKEQEEAL) the composition is skewed to acidic residues. Composition is skewed to polar residues over residues 881 to 891 (TPTANPFNKSV) and 918 to 937 (SASQKSPAFASNSSRSTSIL). Over residues 948-960 (SASGSPSTSKSDS) the composition is skewed to low complexity. The HMG box DNA-binding region spans 1013 to 1076 (KKPKTGFQLW…GDYPGEDGAD (64 aa)). Positions 1087 to 1100 (NMASNGCPQENTDS) are enriched in polar residues.

Homodimer. Found in oocytes and in various other cells.

The protein localises to the nucleus. It localises to the nucleoplasm. Its subcellular location is the cytoplasm. Core replisome component that acts as a replication initiation factor. Binds directly to the CMG complex and functions as a hub to recruit additional proteins to the replication fork. The protein is WD repeat and HMG-box DNA-binding protein 1 (wdhd1) of Xenopus laevis (African clawed frog).